Consider the following 185-residue polypeptide: Potassium-transporting ATPase KdpC subunit (185 aa).

A helical membrane pass occupies residues 14-34; sequence ALSLLTGVAYPLALTGIAAVI. A disordered region spans residues 105 to 128; sequence AQNGAPAPVDAVTASGSGLDPHVS.

The protein belongs to the KdpC family. The system is composed of three essential subunits: KdpA, KdpB and KdpC.

The protein resides in the cell inner membrane. Part of the high-affinity ATP-driven potassium transport (or Kdp) system, which catalyzes the hydrolysis of ATP coupled with the electrogenic transport of potassium into the cytoplasm. This subunit acts as a catalytic chaperone that increases the ATP-binding affinity of the ATP-hydrolyzing subunit KdpB by the formation of a transient KdpB/KdpC/ATP ternary complex. In Cereibacter sphaeroides (strain ATCC 17029 / ATH 2.4.9) (Rhodobacter sphaeroides), this protein is Potassium-transporting ATPase KdpC subunit.